The sequence spans 89 residues: Gibberellin-regulated protein 10 (89 aa).

An N-terminal signal peptide occupies residues 1-25 (MKFPAVKVLIISLLITSSLFILSTA).

It belongs to the GASA family. Six disulfide bonds may be present. As to expression, expressed in vasculature of rosette leaves and roots, cotyledon and root tips and developing seeds.

Its subcellular location is the secreted. In terms of biological role, gibberellin-regulated protein that may function in hormonal controlled steps of development such as seed germination, flowering and seed maturation. This chain is Gibberellin-regulated protein 10 (GASA10), found in Arabidopsis thaliana (Mouse-ear cress).